A 486-amino-acid chain; its full sequence is MSGYIRTLFIRNRFSNYRLRSQIIKYKYSNVSYLNKSALRCGQATDSTHPHILQPGELTPRISAQEYKTRRDRVASLLEDNDFMIVTSAPVRHMCGAAFYEYHQDPNFYYLTGCLEPNAVLLMFKNGASGSYDCSLYLPSKNPYIEKWEGLRTGSTLGKKLFQIENVYDSSLASSVINALGKKSNRIFYNYQTGYLSKMPAASAPEFIQDTLTKLFRTSTQRSVDELLHPLRSIKSTAELECMKEAANISSNVYREIMRKRFEKEAEMSAEFNYRFCIGGCDRSAYVPVVAGGKNGLTIHYTINNDIFRPDEMVLVDAGGEFGGYVTDISRTWPINGKFSTVQRDLYQAVLNVQKKCIKYCCTSNGWSLADIHFESVKLMHEELKQVGIHGTKREITDILYPHSIGHEIGLEIHDCSTNNGYQPLRKNQVITIEPGLYVPEEDGWPQWAQGIAIRIEDSVIVGDDKPFVLTSAAPKEIEEIEALKK.

Residues 1–19 (MSGYIRTLFIRNRFSNYRL) constitute a mitochondrion transit peptide. Residues Asp-317, Asp-328, His-407, Glu-434, and Glu-457 each contribute to the Mn(2+) site.

This sequence belongs to the peptidase M24B family. It depends on Mn(2+) as a cofactor.

It is found in the mitochondrion inner membrane. It carries out the reaction The enzyme cleaves the 36-Pro-Pro-37 bond of cysteine desulfurase (EC 2.8.1.7) removing three amino acid residues (Tyr-Ser-Pro) from the N-terminus after cleavage by mitochondrial processing peptidase.. Aminopeptidase which cleaves preprotein intermediates that carry destabilizing N-ter amino acid residues after the mitochondrial processing peptidase (MPP) cleavage site and is thus critical for stabilization of the mitochondrial proteome. The polypeptide is Intermediate cleaving peptidase 55 (icp55) (Schizosaccharomyces pombe (strain 972 / ATCC 24843) (Fission yeast)).